The following is a 580-amino-acid chain: Probable inositol transporter 3 (580 aa).

12 helical membrane passes run Gly-34 to Ile-54, Glu-69 to Tyr-89, Val-104 to Leu-124, Leu-127 to Met-147, Gly-161 to Thr-181, Trp-187 to Pro-207, Phe-289 to Ala-309, Ala-316 to Val-336, Leu-344 to Asn-364, Phe-455 to Gly-475, Leu-493 to Phe-513, and Gly-524 to Val-544.

This sequence belongs to the major facilitator superfamily. Sugar transporter (TC 2.A.1.1) family.

The protein resides in the membrane. Functionally, plasma membrane inositol-proton symporter. The sequence is that of Probable inositol transporter 3 (INT3) from Arabidopsis thaliana (Mouse-ear cress).